A 1440-amino-acid chain; its full sequence is Glucose transporter type 1 (1440 aa).

An N-terminal signal peptide occupies residues 1–23 (MAFLCAPGLTFFLTYSIFSAVLG). Topologically, residues 24–67 (MLQFGYNTGVINAPEKNIENFMKDVYKDRYGEDISEEFIQQLYS) are cytoplasmic. Residues 68 to 88 (VAVSIFAIGGMLGGFSGGWMA) form a helical membrane-spanning segment. Topologically, residues 89–95 (NRFGRKG) are extracellular. Residues 96–116 (GLLLNNVLGIAGACLMGFTKV) form a helical membrane-spanning segment. Residues 117-127 (SHSYEMLFLGR) lie on the Cytoplasmic side of the membrane. A helical transmembrane segment spans residues 128–148 (FIIGVNCGLNTSLVPMYISEI). At 149 to 162 (APLNLRGGLGTVNQ) the chain is on the extracellular side. Gln-162 contacts D-glucose. A helical membrane pass occupies residues 163-183 (LAVTVGLLLSQVLGIEQILGT). The Cytoplasmic portion of the chain corresponds to 184–186 (NEG). Residues 187–207 (WPILLGLAICPAILQLILLPV) form a helical membrane-spanning segment. Topologically, residues 208 to 272 (CPESPRYLLI…LICSPTLRPP (65 aa)) are extracellular. A helical transmembrane segment spans residues 273–293 (LIIGIVMQLSQQFSGINAVFY). D-glucose-binding positions include 283–284 (QQ) and Asn-289. Residues 294 to 310 (YSTSLFMSSGLTEESAK) lie on the Cytoplasmic side of the membrane. A helical transmembrane segment spans residues 311–331 (FATIGIGAIMVVMTLVSIPLM). Residues 332–339 (DRTGRRTL) are Extracellular-facing. The helical transmembrane segment at 340-360 (HLYGLGGMFIFSIFITISFLI) threads the bilayer. Topologically, residues 361–372 (KEMIDWMSYLSV) are cytoplasmic. The chain crosses the membrane as a helical span at residues 373–393 (VATLGFVVFFAVGPGSIPWMI). Position 391 (Trp-391) interacts with D-glucose. Residues 394-405 (TAELFSQGPRPS) are Extracellular-facing. Residues 406-426 (AMAIAVLVNWMANFVVGIGFP) form a helical membrane-spanning segment. Topologically, residues 427-429 (SMK) are cytoplasmic. Residues 430 to 450 (TALENYTFLPFSVFLAIFWIF) form a helical membrane-spanning segment. Residues 451-534 (TYKKVPETKN…GPYPLSDSTN (84 aa)) are Extracellular-facing. Residues Asn-460 and Asn-480 are each glycosylated (N-linked (GlcNAc...) asparagine). A helical transmembrane segment spans residues 535-555 (LLGPGSSSYGPGGVLGLAGSG). Over 556–1440 (SGLGGQCYTN…RKYTDFLRKK (885 aa)) the chain is Cytoplasmic. 6 disordered regions span residues 628–708 (ERFL…SRYA), 725–808 (QANP…HSVM), 966–987 (APEG…SELP), 1000–1083 (FLAD…GSYH), 1304–1330 (LEGA…PLTH), and 1380–1401 (ANSP…GHHV). Residues 669-678 (PPDSASVRST) are compositionally biased toward polar residues. Low complexity predominate over residues 686 to 704 (QPQQVHHQQQQVHHQQQHQ). A compositionally biased stretch (pro residues) spans 730-739 (QAPPQQPAPP). Positions 754–789 (CQQRKHSHSPHHSRHTSPHSHHHHSHHSRHSRRSRR) are enriched in basic residues. The span at 1313 to 1330 (STTSEHSSSLPSPQPLTH) shows a compositional bias: low complexity.

Belongs to the major facilitator superfamily. Sugar transporter (TC 2.A.1.1) family. Glucose transporter subfamily.

It localises to the membrane. Its function is as follows. Facilitative glucose transporter. In Drosophila melanogaster (Fruit fly), this protein is Glucose transporter type 1 (Glut1).